Consider the following 860-residue polypeptide: Probable leucine--tRNA ligase, cytoplasmic (860 aa).

The 'HIGH' region motif lies at 41–51 (PYMNGKLHLGH). Positions 552-556 (KMSKS) match the 'KMSKS' region motif. ATP is bound at residue K555.

Belongs to the class-I aminoacyl-tRNA synthetase family.

Its subcellular location is the cytoplasm. The catalysed reaction is tRNA(Leu) + L-leucine + ATP = L-leucyl-tRNA(Leu) + AMP + diphosphate. This chain is Probable leucine--tRNA ligase, cytoplasmic, found in Enterocytozoon bieneusi (strain H348) (Microsporidian parasite).